Reading from the N-terminus, the 510-residue chain is ATP synthase subunit alpha 1 (510 aa).

ATP is bound at residue 169–176; the sequence is GDRQTGKT.

The protein belongs to the ATPase alpha/beta chains family. As to quaternary structure, F-type ATPases have 2 components, CF(1) - the catalytic core - and CF(0) - the membrane proton channel. CF(1) has five subunits: alpha(3), beta(3), gamma(1), delta(1), epsilon(1). CF(0) has three main subunits: a(1), b(2) and c(9-12). The alpha and beta chains form an alternating ring which encloses part of the gamma chain. CF(1) is attached to CF(0) by a central stalk formed by the gamma and epsilon chains, while a peripheral stalk is formed by the delta and b chains.

Its subcellular location is the cell inner membrane. It carries out the reaction ATP + H2O + 4 H(+)(in) = ADP + phosphate + 5 H(+)(out). Its function is as follows. Produces ATP from ADP in the presence of a proton gradient across the membrane. The alpha chain is a regulatory subunit. This is ATP synthase subunit alpha 1 from Marinomonas sp. (strain MWYL1).